Reading from the N-terminus, the 218-residue chain is Putative tRNA methyltransferase MG248 (218 aa).

Belongs to the TrmK family.

It localises to the cytoplasm. In Mycoplasma genitalium (strain ATCC 33530 / DSM 19775 / NCTC 10195 / G37) (Mycoplasmoides genitalium), this protein is Putative tRNA methyltransferase MG248.